The primary structure comprises 283 residues: Pantothenate synthetase 2 (283 aa).

Residue 34-41 (MGALHDGH) coordinates ATP. Histidine 41 functions as the Proton donor in the catalytic mechanism. Glutamine 65 is a (R)-pantoate binding site. Residue glutamine 65 participates in beta-alanine binding. 152–155 (GEKD) is a binding site for ATP. A (R)-pantoate-binding site is contributed by glutamine 158. ATP contacts are provided by residues valine 181 and 189–192 (MSSR).

This sequence belongs to the pantothenate synthetase family. In terms of assembly, homodimer.

The protein localises to the cytoplasm. The enzyme catalyses (R)-pantoate + beta-alanine + ATP = (R)-pantothenate + AMP + diphosphate + H(+). The protein operates within cofactor biosynthesis; (R)-pantothenate biosynthesis; (R)-pantothenate from (R)-pantoate and beta-alanine: step 1/1. In terms of biological role, catalyzes the condensation of pantoate with beta-alanine in an ATP-dependent reaction via a pantoyl-adenylate intermediate. The chain is Pantothenate synthetase 2 from Bradyrhizobium diazoefficiens (strain JCM 10833 / BCRC 13528 / IAM 13628 / NBRC 14792 / USDA 110).